Here is a 1073-residue protein sequence, read N- to C-terminus: Carbamoyl phosphate synthase large chain (1073 aa).

The tract at residues 2–403 (PKRTDIKSIL…SLQKALRGLE (402 aa)) is carboxyphosphate synthetic domain. R129, R169, G175, G176, E208, L210, E215, G241, I242, H243, Q285, and E299 together coordinate ATP. The region spanning 133–328 (DVAMKKIGLE…IAKVAAKLAV (196 aa)) is the ATP-grasp 1 domain. Mg(2+)-binding residues include Q285, E299, and N301. Residues Q285, E299, and N301 each contribute to the Mn(2+) site. Positions 404-553 (VGATGFDPKV…YSTYEEECEA (150 aa)) are oligomerization domain. The segment at 554–936 (NPSTDREKIM…AFAKAQLGSN (383 aa)) is carbamoyl phosphate synthetic domain. The 192-residue stretch at 679-870 (QHAVERLKLK…LAKVAARVMA (192 aa)) folds into the ATP-grasp 2 domain. The ATP site is built by R715, H754, L756, E761, G786, V787, H788, S789, Q829, and E841. Mg(2+)-binding residues include Q829, E841, and N843. Mn(2+)-binding residues include Q829, E841, and N843. In terms of domain architecture, MGS-like spans 937 to 1073 (STMKKHGRAL…SVQEMHAQIK (137 aa)). The tract at residues 937 to 1073 (STMKKHGRAL…SVQEMHAQIK (137 aa)) is allosteric domain.

The protein belongs to the CarB family. In terms of assembly, composed of two chains; the small (or glutamine) chain promotes the hydrolysis of glutamine to ammonia, which is used by the large (or ammonia) chain to synthesize carbamoyl phosphate. Tetramer of heterodimers (alpha,beta)4. The cofactor is Mg(2+). It depends on Mn(2+) as a cofactor.

The enzyme catalyses hydrogencarbonate + L-glutamine + 2 ATP + H2O = carbamoyl phosphate + L-glutamate + 2 ADP + phosphate + 2 H(+). It carries out the reaction hydrogencarbonate + NH4(+) + 2 ATP = carbamoyl phosphate + 2 ADP + phosphate + 2 H(+). It participates in amino-acid biosynthesis; L-arginine biosynthesis; carbamoyl phosphate from bicarbonate: step 1/1. The protein operates within pyrimidine metabolism; UMP biosynthesis via de novo pathway; (S)-dihydroorotate from bicarbonate: step 1/3. In terms of biological role, large subunit of the glutamine-dependent carbamoyl phosphate synthetase (CPSase). CPSase catalyzes the formation of carbamoyl phosphate from the ammonia moiety of glutamine, carbonate, and phosphate donated by ATP, constituting the first step of 2 biosynthetic pathways, one leading to arginine and/or urea and the other to pyrimidine nucleotides. The large subunit (synthetase) binds the substrates ammonia (free or transferred from glutamine from the small subunit), hydrogencarbonate and ATP and carries out an ATP-coupled ligase reaction, activating hydrogencarbonate by forming carboxy phosphate which reacts with ammonia to form carbamoyl phosphate. The polypeptide is Carbamoyl phosphate synthase large chain (Escherichia coli O6:H1 (strain CFT073 / ATCC 700928 / UPEC)).